The chain runs to 101 residues: Apolipoprotein C-II (101 aa).

A signal peptide spans M1 to G22. Positions D23–Q28 are cleaved as a propeptide — removed in mature form. The interval A66–M74 is lipid binding. The lipoprotein lipase cofactor stretch occupies residues S78 to P101.

It belongs to the apolipoprotein C2 family. Proapolipoprotein C-II is synthesized as a sialic acid containing glycoprotein which is subsequently desialylated prior to its proteolytic processing. Post-translationally, proapolipoprotein C-II, the major form found in plasma undergoes proteolytic cleavage of its N-terminal hexapeptide to generate the mature form apolipoprotein C-II, which occurs as the minor form in plasma.

The protein localises to the secreted. Its function is as follows. Component of chylomicrons, very low-density lipoproteins (VLDL), low-density lipoproteins (LDL), and high-density lipoproteins (HDL) in plasma. Plays an important role in lipoprotein metabolism as an activator of lipoprotein lipase, the enzyme which hydrolyzes the triacylglycerols on chylomicrons and VLDL. This chain is Apolipoprotein C-II (APOC2), found in Panthera tigris altaica (Siberian tiger).